The sequence spans 400 residues: Acetate kinase (400 aa).

Asparagine 10 serves as a coordination point for Mg(2+). Lysine 17 contacts ATP. Position 91 (arginine 91) interacts with substrate. The active-site Proton donor/acceptor is aspartate 150. ATP is bound by residues 210–214 (HLGNG), 285–287 (DCR), and 333–337 (GIGEN). Glutamate 387 contacts Mg(2+).

This sequence belongs to the acetokinase family. Homodimer. Mg(2+) is required as a cofactor. The cofactor is Mn(2+).

It localises to the cytoplasm. The catalysed reaction is acetate + ATP = acetyl phosphate + ADP. It participates in metabolic intermediate biosynthesis; acetyl-CoA biosynthesis; acetyl-CoA from acetate: step 1/2. Catalyzes the formation of acetyl phosphate from acetate and ATP. Can also catalyze the reverse reaction. The protein is Acetate kinase of Proteus mirabilis (strain HI4320).